The following is a 597-amino-acid chain: Elongation factor 4 (597 aa).

Residues Lys-2–Glu-184 enclose the tr-type G domain. GTP contacts are provided by residues Asp-14–Thr-19 and Asn-131–Asp-134.

The protein belongs to the TRAFAC class translation factor GTPase superfamily. Classic translation factor GTPase family. LepA subfamily.

The protein localises to the cell inner membrane. It catalyses the reaction GTP + H2O = GDP + phosphate + H(+). Its function is as follows. Required for accurate and efficient protein synthesis under certain stress conditions. May act as a fidelity factor of the translation reaction, by catalyzing a one-codon backward translocation of tRNAs on improperly translocated ribosomes. Back-translocation proceeds from a post-translocation (POST) complex to a pre-translocation (PRE) complex, thus giving elongation factor G a second chance to translocate the tRNAs correctly. Binds to ribosomes in a GTP-dependent manner. This is Elongation factor 4 from Aliivibrio salmonicida (strain LFI1238) (Vibrio salmonicida (strain LFI1238)).